A 450-amino-acid chain; its full sequence is Phosphoglucosamine mutase (450 aa).

Ser102 (phosphoserine intermediate) is an active-site residue. The Mg(2+) site is built by Ser102, Asp242, Asp244, and Asp246. Phosphoserine is present on Ser102.

It belongs to the phosphohexose mutase family. Mg(2+) is required as a cofactor. In terms of processing, activated by phosphorylation.

The catalysed reaction is alpha-D-glucosamine 1-phosphate = D-glucosamine 6-phosphate. Catalyzes the conversion of glucosamine-6-phosphate to glucosamine-1-phosphate. The protein is Phosphoglucosamine mutase of Lachnospira eligens (strain ATCC 27750 / DSM 3376 / VPI C15-48 / C15-B4) (Eubacterium eligens).